Here is a 373-residue protein sequence, read N- to C-terminus: Glutamine synthetase (373 aa).

Residue T2 is modified to N-acetylthreonine. The required for glutamine-induced ubiquitination by CRL4(CRBN) and proteasomal degradation stretch occupies residues 2–25 (TTSASSHLNKGIKQVYMSLPQGEK). Residues K11 and K14 each carry the N6-acetyllysine; by EP300 modification. One can recognise a GS beta-grasp domain in the interval 24 to 106 (EKVQAMYIWI…VLCEVFKYNR (83 aa)). A Phosphotyrosine modification is found at Y104. A GS catalytic domain is found at 113-373 (LRHTCKRIMD…TGDEPFQYKN (261 aa)). ATP is bound at residue E134. Residues E134, E136, E196, and E203 each contribute to the Mn(2+) site. Residue 203 to 208 (EFQIGP) coordinates ATP. 246-247 (NW) is a binding site for L-glutamate. H253 provides a ligand contact to Mn(2+). ATP is bound by residues 255-257 (NFS), R319, and R324. An L-glutamate-binding site is contributed by R319. ADP is bound at residue 336–338 (YFE). Residue E338 coordinates Mn(2+). R340 provides a ligand contact to L-glutamate. S343 carries the post-translational modification Phosphoserine.

This sequence belongs to the glutamine synthetase family. As to quaternary structure, decamer; composed of two pentamers. Interacts with PALMD. Interacts with RHOJ. Interacts with BEST2; this interaction tethers a fraction of GLUL to the membrane, causing a decrease of cytosolic glutamine synthase (GS) activity and inhibits the chloride channel activity of BEST2 by affecting the gating at the aperture in the absence of intracellular glutamate. Mg(2+) is required as a cofactor. The cofactor is Mn(2+). Acetylated by EP300/p300; acetylation is stimulated by increased glutamine levels and promotes ubiquitin-mediated proteasomal degradation. Post-translationally, palmitoylated; undergoes autopalmitoylation. In terms of processing, ubiquitinated by ZNRF1. Ubiquitinated by the DCX (DDB1-CUL4-X-box) E3 ubiquitin-protein ligase complex called CRL4(CRBN), leading to proteasomal degradation. In terms of tissue distribution, expressed in endothelial cells.

The protein localises to the cytoplasm. It is found in the cytosol. It localises to the microsome. The protein resides in the mitochondrion. Its subcellular location is the cell membrane. It carries out the reaction L-glutamate + NH4(+) + ATP = L-glutamine + ADP + phosphate + H(+). The catalysed reaction is L-cysteinyl-[protein] + hexadecanoyl-CoA = S-hexadecanoyl-L-cysteinyl-[protein] + CoA. With respect to regulation, glutamine synthetase activity is inhibited by methionine sulfoximine (MSO). Glutamine synthetase that catalyzes the ATP-dependent conversion of glutamate and ammonia to glutamine. Its role depends on tissue localization: in the brain, it regulates the levels of toxic ammonia and converts neurotoxic glutamate to harmless glutamine, whereas in the liver, it is one of the enzymes responsible for the removal of ammonia. Plays a key role in ammonium detoxification during erythropoiesis: the glutamine synthetase activity is required to remove ammonium generated by porphobilinogen deaminase (HMBS) during heme biosynthesis to prevent ammonium accumulation and oxidative stress. Essential for proliferation of fetal skin fibroblasts. Independently of its glutamine synthetase activity, required for endothelial cell migration during vascular development: acts by regulating membrane localization and activation of the GTPase RHOJ, possibly by promoting RHOJ palmitoylation. May act as a palmitoyltransferase for RHOJ: able to autopalmitoylate and then transfer the palmitoyl group to RHOJ. Plays a role in ribosomal 40S subunit biogenesis. Through the interaction with BEST2, inhibits BEST2 channel activity by affecting the gating at the aperture in the absence of intracellular L-glutamate, but sensitizes BEST2 to intracellular L-glutamate, which promotes the opening of BEST2 and thus relieves its inhibitory effect on BEST2. The sequence is that of Glutamine synthetase from Homo sapiens (Human).